Reading from the N-terminus, the 338-residue chain is GTPase Obg (338 aa).

Positions 1–159 constitute an Obg domain; the sequence is MKFIDEVTLF…AKLRLELKLM (159 aa). An OBG-type G domain is found at 160–331; it reads ADVGLLGLPN…LLDEIARRLW (172 aa). GTP is bound by residues 166 to 173, 191 to 195, 213 to 216, 283 to 286, and 312 to 314; these read GLPNAGKS, FTTIK, DIPG, TKLD, and SSA. The Mg(2+) site is built by Ser-173 and Thr-193.

The protein belongs to the TRAFAC class OBG-HflX-like GTPase superfamily. OBG GTPase family. Monomer. The cofactor is Mg(2+).

The protein localises to the cytoplasm. Its function is as follows. An essential GTPase which binds GTP, GDP and possibly (p)ppGpp with moderate affinity, with high nucleotide exchange rates and a fairly low GTP hydrolysis rate. Plays a role in control of the cell cycle, stress response, ribosome biogenesis and in those bacteria that undergo differentiation, in morphogenesis control. In Pelobacter propionicus (strain DSM 2379 / NBRC 103807 / OttBd1), this protein is GTPase Obg.